Consider the following 255-residue polypeptide: Acetyl-coenzyme A carboxylase carboxyl transferase subunit alpha (255 aa).

The CoA carboxyltransferase C-terminal domain maps to 1-235 (MNIAKIVREA…KKELQTELAR (235 aa)).

This sequence belongs to the AccA family. As to quaternary structure, acetyl-CoA carboxylase is a heterohexamer composed of biotin carboxyl carrier protein (AccB), biotin carboxylase (AccC) and two subunits each of ACCase subunit alpha (AccA) and ACCase subunit beta (AccD).

The protein localises to the cytoplasm. The catalysed reaction is N(6)-carboxybiotinyl-L-lysyl-[protein] + acetyl-CoA = N(6)-biotinyl-L-lysyl-[protein] + malonyl-CoA. It functions in the pathway lipid metabolism; malonyl-CoA biosynthesis; malonyl-CoA from acetyl-CoA: step 1/1. In terms of biological role, component of the acetyl coenzyme A carboxylase (ACC) complex. First, biotin carboxylase catalyzes the carboxylation of biotin on its carrier protein (BCCP) and then the CO(2) group is transferred by the carboxyltransferase to acetyl-CoA to form malonyl-CoA. The chain is Acetyl-coenzyme A carboxylase carboxyl transferase subunit alpha from Streptococcus pneumoniae (strain CGSP14).